The chain runs to 286 residues: Homoserine kinase (286 aa).

An ATP-binding site is contributed by 78–88 (PLARGLGSSSS).

This sequence belongs to the GHMP kinase family. Homoserine kinase subfamily.

It localises to the cytoplasm. The catalysed reaction is L-homoserine + ATP = O-phospho-L-homoserine + ADP + H(+). It functions in the pathway amino-acid biosynthesis; L-threonine biosynthesis; L-threonine from L-aspartate: step 4/5. In terms of biological role, catalyzes the ATP-dependent phosphorylation of L-homoserine to L-homoserine phosphate. In Streptococcus equi subsp. zooepidemicus (strain H70), this protein is Homoserine kinase.